The sequence spans 260 residues: Repetitive secreted protein 1 (260 aa).

Positions 1–20 (MKLSFTIVATAALVASCTFA) are cleaved as a signal peptide.

Rsp1 is processed by the subtilisin-like endoprotease kex2. Cleavage by kex2 generates 11 peptides.

Its subcellular location is the secreted. Its function is as follows. Repetitive secreted protein essential for pathogenic development. Hum3 and rsp1 together are pathogenicity proteins that share an essential function in early stages of the infection. This chain is Repetitive secreted protein 1, found in Mycosarcoma maydis (Corn smut fungus).